We begin with the raw amino-acid sequence, 396 residues long: Adenylyltransferase and sulfurtransferase UBA4 (396 aa).

ATP is bound by residues glycine 51, aspartate 72, 79–83 (SNLHR), lysine 95, and 139–140 (DG). Zn(2+) is bound by residues cysteine 180 and cysteine 183. Cysteine 197 functions as the Glycyl thioester intermediate; for adenylyltransferase activity in the catalytic mechanism. Cysteine 257 and cysteine 260 together coordinate Zn(2+). The 90-residue stretch at 305–394 (VSTKHILLDV…WAKNVDEKFP (90 aa)) folds into the Rhodanese domain. Cysteine 355 acts as the Cysteine persulfide intermediate; for sulfurtransferase activity in catalysis.

This sequence in the N-terminal section; belongs to the HesA/MoeB/ThiF family. UBA4 subfamily. It depends on Zn(2+) as a cofactor.

It is found in the cytoplasm. It localises to the cytosol. The protein operates within tRNA modification; 5-methoxycarbonylmethyl-2-thiouridine-tRNA biosynthesis. Functionally, plays a central role in 2-thiolation of mcm(5)S(2)U at tRNA wobble positions of cytosolic tRNA(Lys), tRNA(Glu) and tRNA(Gln). Acts by mediating the C-terminal thiocarboxylation of sulfur carrier URM1. Its N-terminus first activates URM1 as acyl-adenylate (-COAMP), then the persulfide sulfur on the catalytic cysteine is transferred to URM1 to form thiocarboxylation (-COSH) of its C-terminus. The reaction probably involves hydrogen sulfide that is generated from the persulfide intermediate and that acts as a nucleophile towards URM1. Subsequently, a transient disulfide bond is formed. Does not use thiosulfate as sulfur donor; NFS1 probably acting as a sulfur donor for thiocarboxylation reactions. Prior mcm(5) tRNA modification by the elongator complex is required for 2-thiolation. May also be involved in protein urmylation. The polypeptide is Adenylyltransferase and sulfurtransferase UBA4 (Yarrowia lipolytica (strain CLIB 122 / E 150) (Yeast)).